Reading from the N-terminus, the 803-residue chain is Leucine--tRNA ligase (803 aa).

Positions 40 to 51 (PYPSGAGLHVGH) match the 'HIGH' region motif. Residues 575–579 (KMSKS) carry the 'KMSKS' region motif. Lys-578 contributes to the ATP binding site.

Belongs to the class-I aminoacyl-tRNA synthetase family.

It localises to the cytoplasm. The enzyme catalyses tRNA(Leu) + L-leucine + ATP = L-leucyl-tRNA(Leu) + AMP + diphosphate. The protein is Leucine--tRNA ligase of Listeria monocytogenes serovar 1/2a (strain ATCC BAA-679 / EGD-e).